Consider the following 126-residue polypeptide: RutC family protein y4sK (126 aa).

This sequence belongs to the RutC family.

The protein is RutC family protein y4sK of Sinorhizobium fredii (strain NBRC 101917 / NGR234).